The sequence spans 365 residues: MSETRLFVGRIPPQATREDMMDFFKGYGQILDCKLMNGFGFVEVEDARDARDIVNDFQGKEFMGSRIVVEPARGERRRRENFRESAASKYPRPRRTGFRLIVENLSEDVSWQDLKDVMRKAGEPTFTDAHRENPGAGVVEFSTEEDMRNALTSLNGEVIKGQAVTLREDPDAANEPLPEVPSRFRSRSPPARRRYRDDYRRGGDYRRDAYRPGRDDERRYAPRGEYRRNNRDEYRRGGRDEYRRNSRSDYRRPHDDEYRRPRGDEYRPGRDEYRRSRDDGRPSHDDEYRRDAYSRSPSPRRDREENRSPAYEGSKSYSAAPEASMESSAPTESYDKPAASEEQQPLQNHSDVGNGSAEGQVAAEW.

RRM domains follow at residues 6–69 (LFVG…RIVV) and 100–166 (LIVE…AVTL). Residues 166 to 365 (LREDPDAANE…SAEGQVAAEW (200 aa)) are disordered. Basic residues predominate over residues 184-194 (FRSRSPPARRR). 7 positions are modified to phosphoserine: Ser186, Ser188, Ser276, Ser294, Ser296, Ser298, and Ser308. Residues 195-307 (YRDDYRRGGD…SPRRDREENR (113 aa)) are compositionally biased toward basic and acidic residues. Positions 316–332 (SYSAAPEASMESSAPTE) are enriched in low complexity. Polar residues predominate over residues 341–353 (EEQQPLQNHSDVG).

The protein belongs to the splicing factor SR family. In terms of processing, extensively phosphorylated on serine residues in the RS domain.

Its subcellular location is the nucleus. Its function is as follows. Has a role in pre-mRNA splicing where it is involved in spliceosome assembly. The protein is Pre-mRNA-splicing factor srp2 (srp2) of Schizosaccharomyces pombe (strain 972 / ATCC 24843) (Fission yeast).